The sequence spans 427 residues: Trigger factor (427 aa).

A PPIase FKBP-type domain is found at 163 to 248; that stretch reads GDTVVIDFVG…IHEVKTKEVP (86 aa).

It belongs to the FKBP-type PPIase family. Tig subfamily.

It localises to the cytoplasm. The enzyme catalyses [protein]-peptidylproline (omega=180) = [protein]-peptidylproline (omega=0). In terms of biological role, involved in protein export. Acts as a chaperone by maintaining the newly synthesized protein in an open conformation. Functions as a peptidyl-prolyl cis-trans isomerase. The protein is Trigger factor (tig) of Streptococcus pyogenes serotype M1.